The following is a 423-amino-acid chain: MAEIPDETIQQFMALTNVSHNIAVQYLSEFGDLNEALNSYYASQTDDQKDRREEAHWNRQQEKALKQEAFSTNSSNKAINTEHVGGLCPKPGSSQGSNEYLKRKGSTSPEPTKGSSRSGSGNNSRFMSFSDMVRGQADDDDEDQPRNTFAGGETSGLEVTDPSDPNSLLKDLLEKARRGGQMGAENGFRDDEDHEMGANRFTGRGFRLGSTIDAADEVVEDNTSQSQRRPEKVTREITFWKEGFQVADGPLYRYDDPANSFYLSELNQGRAPLKLLDVQFGQEVEVNVYKKLDESYKAPTRKLGGFSGQGQRLGSPIPGESSPAEVPKNETPAAQEQPMPDNEPKQGDTSIQIRYANGKREVLHCNSTDTVKFLYEHVTSNANTDPSRNFTLNYAFPIKPISNDETTLKDADLLNSVVVQRWA.

The tract at residues 44 to 167 (QTDDQKDRRE…EVTDPSDPNS (124 aa)) is disordered. A compositionally biased stretch (basic and acidic residues) spans 46–66 (DDQKDRREEAHWNRQQEKALK). The segment covering 69-79 (AFSTNSSNKAI) has biased composition (polar residues). Residues 115 to 130 (SSRSGSGNNSRFMSFS) show a composition bias toward low complexity. 3 positions are modified to phosphoserine: Ser-128, Ser-210, and Ser-224. The SEP domain maps to 232 to 297 (KVTREITFWK…VYKKLDESYK (66 aa)). Residue Lys-241 forms a Glycyl lysine isopeptide (Lys-Gly) (interchain with G-Cter in ubiquitin) linkage. The interval 299-348 (PTRKLGGFSGQGQRLGSPIPGESSPAEVPKNETPAAQEQPMPDNEPKQGD) is disordered. Residues Ser-315, Ser-321, and Ser-322 each carry the phosphoserine modification. Thr-331 bears the Phosphothreonine mark. The region spanning 344–421 (PKQGDTSIQI…DLLNSVVVQR (78 aa)) is the UBX domain.

As to quaternary structure, forms a complex composed of CDC48, NPL4, UFD1, DOA1, SHP1 and deubiquitinase OTU1. Interacts with CDC48.

It is found in the nucleus. The protein localises to the cytoplasm. Its function is as follows. Involved in CDC48-dependent protein degradation through the ubiquitin/proteasome pathway. Direct or indirect positive regulator of GLC7 activity. This Saccharomyces cerevisiae (strain ATCC 204508 / S288c) (Baker's yeast) protein is UBX domain-containing protein 1 (SHP1).